Here is a 764-residue protein sequence, read N- to C-terminus: MVTTHNLGFPRIGAKRELKFGLERYWKGESSRDELKALGAELRRRHWHDQRDLDLAPIGDFAFYDQVLDMSFTLGNLPKRVQDFHGDALDNAFRVARGRSAQSAEAHAACCGGVAAGEMTKWFDTNYHYIVPEFHADTNFSLDPSRLLQQLAEANAQGVNAKPVILGPVTYLWLGKAKDDSDRLALLPKLLPVYGALLDTLTAQGVEWVQIDEPILVTELDAEWRQAFRTAYAALETRRINLLLATYFGQLQDNLTLAASLPVDGLHIDAINARDEVDALVRELPPERVLSIGAINGRNIWKTDLNATLDWLEPLAKQLGDRLWLAPSCSLLHVPVDLANEAKLDAEIRSWLAFALQKLDELKVLATALNEGRDTVADALAANAAAIESRRRSPRVNNPAVKAAIARIDARLGNRASPYAQRASKQSARLNLPAFPTTTIGSFPQTAEIRQARSRFKAGTLDEAGYRTAMQAEIERSVREQESLELDVLVHGEAERNDMVEYFGEQLDGYAFSQFGWVQSYGSRCVKPPILFGDISRPKAMTVEWITYAQSLTNKPMKGMLTGPVTILNWSFVRDDQPRSVSCYQLALAIRDEVLDLEQAGVRVIQIDEAALREGLPLRRAQWSEYLKWAVESFRITANGVQDDTQIHTHMCYSEFNDIIASIADMDADVITIETSRSDMELLDAFDDFKYPNEIGPGVYDIHSPNIPTQDHIVGLMRKAAERIPAERLWVNPDCGLKTRQWGEVIPALTNMVAAAKTLRNQVR.

Residues 16–19 and Lys-121 each bind 5-methyltetrahydropteroyltri-L-glutamate; that span reads RELK. Residues 440–442 and Glu-493 contribute to the L-homocysteine site; that span reads IGS. L-methionine-binding positions include 440 to 442 and Glu-493; that span reads IGS. Residues 524 to 525 and Trp-570 each bind 5-methyltetrahydropteroyltri-L-glutamate; that span reads RC. Asp-608 contributes to the L-homocysteine binding site. Residue Asp-608 coordinates L-methionine. 5-methyltetrahydropteroyltri-L-glutamate is bound at residue Glu-614. 3 residues coordinate Zn(2+): His-650, Cys-652, and Glu-674. The active-site Proton donor is the His-703. Cys-735 provides a ligand contact to Zn(2+).

Belongs to the vitamin-B12 independent methionine synthase family. Zn(2+) is required as a cofactor.

The catalysed reaction is 5-methyltetrahydropteroyltri-L-glutamate + L-homocysteine = tetrahydropteroyltri-L-glutamate + L-methionine. Its pathway is amino-acid biosynthesis; L-methionine biosynthesis via de novo pathway; L-methionine from L-homocysteine (MetE route): step 1/1. In terms of biological role, catalyzes the transfer of a methyl group from 5-methyltetrahydrofolate to homocysteine resulting in methionine formation. In Burkholderia cenocepacia (strain ATCC BAA-245 / DSM 16553 / LMG 16656 / NCTC 13227 / J2315 / CF5610) (Burkholderia cepacia (strain J2315)), this protein is 5-methyltetrahydropteroyltriglutamate--homocysteine methyltransferase.